Consider the following 334-residue polypeptide: Cytosolic Fe-S cluster assembly factor NBP35 (334 aa).

Cys33, Cys47, Cys50, and Cys56 together coordinate [4Fe-4S] cluster. 86–93 contributes to the ATP binding site; it reads GKGGVGKS. Cys259 and Cys262 together coordinate [4Fe-4S] cluster.

Belongs to the Mrp/NBP35 ATP-binding proteins family. NUBP1/NBP35 subfamily. As to quaternary structure, heterotetramer of 2 NBP35 and 2 CFD1 chains. It depends on [4Fe-4S] cluster as a cofactor.

The protein localises to the cytoplasm. It localises to the nucleus. In terms of biological role, component of the cytosolic iron-sulfur (Fe/S) protein assembly (CIA) machinery. Required for maturation of extramitochondrial Fe-S proteins. The NBP35-CFD1 heterotetramer forms a Fe-S scaffold complex, mediating the de novo assembly of an Fe-S cluster and its transfer to target apoproteins. Required for biogenesis and export of both ribosomal subunits, which may reflect a role in assembly of the Fe/S clusters in RLI1, a protein which performs rRNA processing and ribosome export. The chain is Cytosolic Fe-S cluster assembly factor NBP35 from Candida glabrata (strain ATCC 2001 / BCRC 20586 / JCM 3761 / NBRC 0622 / NRRL Y-65 / CBS 138) (Yeast).